We begin with the raw amino-acid sequence, 328 residues long: tRNA uridine(34) hydroxylase (328 aa).

Residues 123–217 (SDPETVLIDT…YLEEVPKEKS (95 aa)) enclose the Rhodanese domain. Cys-177 acts as the Cysteine persulfide intermediate in catalysis. The disordered stretch occupies residues 304 to 328 (AKKLAQLNKQKKQQAKEAARKKAQQ). The span at 317 to 328 (QAKEAARKKAQQ) shows a compositional bias: basic and acidic residues.

This sequence belongs to the TrhO family.

The catalysed reaction is uridine(34) in tRNA + AH2 + O2 = 5-hydroxyuridine(34) in tRNA + A + H2O. In terms of biological role, catalyzes oxygen-dependent 5-hydroxyuridine (ho5U) modification at position 34 in tRNAs. This chain is tRNA uridine(34) hydroxylase, found in Francisella tularensis subsp. holarctica (strain LVS).